A 92-amino-acid chain; its full sequence is Large ribosomal subunit protein bL25 (92 aa).

This sequence belongs to the bacterial ribosomal protein bL25 family. As to quaternary structure, part of the 50S ribosomal subunit; part of the 5S rRNA/L5/L18/L25 subcomplex. Contacts the 5S rRNA. Binds to the 5S rRNA independently of L5 and L18.

In terms of biological role, this is one of the proteins that binds to the 5S RNA in the ribosome where it forms part of the central protuberance. This chain is Large ribosomal subunit protein bL25, found in Aliivibrio fischeri (strain MJ11) (Vibrio fischeri).